The sequence spans 162 residues: Phosphopantetheine adenylyltransferase (162 aa).

Substrate is bound at residue Ser-11. ATP is bound by residues 11 to 12 and His-19; that span reads SF. Substrate-binding residues include Lys-43, Val-76, and Arg-90. ATP contacts are provided by residues 91-93, Glu-101, and 126-132; these read GLR and HLYISSS.

This sequence belongs to the bacterial CoaD family. Homohexamer. Mg(2+) is required as a cofactor.

It is found in the cytoplasm. It carries out the reaction (R)-4'-phosphopantetheine + ATP + H(+) = 3'-dephospho-CoA + diphosphate. It participates in cofactor biosynthesis; coenzyme A biosynthesis; CoA from (R)-pantothenate: step 4/5. In terms of biological role, reversibly transfers an adenylyl group from ATP to 4'-phosphopantetheine, yielding dephospho-CoA (dPCoA) and pyrophosphate. This chain is Phosphopantetheine adenylyltransferase, found in Streptococcus pneumoniae (strain 70585).